Here is a 267-residue protein sequence, read N- to C-terminus: MSSFASFLDMWRDLDKYLSSLTIFNIQSSFMRIFLLFLFFVLFTFGVEGYVIEEINGSTGLRIHKEIKRKVYITEDALITETEKEFMVQKIENGLPRIYRVIKSSKSYMDFSKMTPLFLVSLPFLDCKQRVCVVNRGAFRPTNEYKKIRGFKARKVVVESHALGKKTTLIQWYTKEWKELVEANRLEDKFYVNFIRAIMKEKNLSEANIPLKEIQNFLKEINEKFGGVVRTQQQMPLFNTYSEVISVKKTEIPDYIYKLPEGYTKIK.

The chain crosses the membrane as a helical span at residues 30 to 52 (FMRIFLLFLFFVLFTFGVEGYVI).

The protein localises to the membrane. This is an uncharacterized protein from Aquifex aeolicus (strain VF5).